We begin with the raw amino-acid sequence, 881 residues long: Envelope glycoprotein gp160 (881 aa).

The signal sequence occupies residues 1 to 19; that stretch reads MGCLGNQLLIAILLLSVYG. Topologically, residues 20 to 696 are extracellular; it reads IYCTQYVTVF…ASWIKYIQYG (677 aa). N37 is a glycosylation site (N-linked (GlcNAc...) asparagine; by host). A disulfide bridge links C44 with C57. N70, N114, N148, N158, N186, N200, N204, N214, N246, N249, N280, N286, N297, N308, N318, N373, and N379 each carry an N-linked (GlcNAc...) asparagine; by host glycan. Disulfide bonds link C101–C222, C108–C213, C113–C170, C235–C265, and C245–C257. Residues 113 to 169 are V1; it reads CNKSETDRWGLTKSSTTITTAAPTSAPVSEKIDMVNETSSCIAQNNCTGLEQEQMIS. The V2 stretch occupies residues 170–213; that stretch reads CKFTMTGLKRDKTKEYNETWYSTDLVCEQGNSTDNESRCYMNHC. The interval 313–345 is V3; it reads CRRPGNKTVLPVTIMSGLVFHSQPLTDRPKQAW. C313 and C346 are joined by a disulfide. 2 disulfide bridges follow: C397/C461 and C404/C434. Positions 404-434 are V4; it reads CKMNWFLNWVEDRDVTTQRPKERHRRNYVPC. 2 N-linked (GlcNAc...) asparagine; by host glycosylation sites follow: N462 and N478. The V5 stretch occupies residues 477-484; that stretch reads GNQTSITM. The segment at 528 to 548 is fusion peptide; that stretch reads GVFVLGFLGFLATAGSAMGAA. The segment at 591–607 is immunosuppression; the sequence is LQTRVTAIEKYLEDQAQ. 3 N-linked (GlcNAc...) asparagine; by host glycosylation sites follow: N627, N636, and N652. A coiled-coil region spans residues 636-668; sequence NDTWQEWERKVDFLEENITALLEEAQIQQEKNM. Residues 673–694 are MPER; binding to GalCer; that stretch reads KLNSWDVFGNWFDLASWIKYIQ. The chain crosses the membrane as a helical span at residues 697–717; sequence IYVVVGVILLRIVIYIVQMLA. The Cytoplasmic portion of the chain corresponds to 718-881; sequence KLRQGYRPVF…IRQGLELTLL (164 aa). The short motif at 723 to 726 is the YXXV motif; contains endocytosis signal element; that stretch reads YRPV. The tract at residues 737-761 is disordered; that stretch reads THTQQDPALPTREGKEGDGGEGGGN. The S-palmitoyl cysteine; by host moiety is linked to residue C789. A Di-leucine internalization motif motif is present at residues 880 to 881; sequence LL.

In terms of assembly, the mature envelope protein (Env) consists of a homotrimer of non-covalently associated gp120-gp41 heterodimers. The resulting complex protrudes from the virus surface as a spike. Interacts with host CD4 and CCR5. Gp120 also interacts with the C-type lectins CD209/DC-SIGN and CLEC4M/DC-SIGNR (collectively referred to as DC-SIGN(R)). As to quaternary structure, the mature envelope protein (Env) consists of a homotrimer of non-covalently associated gp120-gp41 heterodimers. The resulting complex protrudes from the virus surface as a spike. Specific enzymatic cleavages in vivo yield mature proteins. Envelope glycoproteins are synthesized as an inactive precursor that is heavily N-glycosylated and processed likely by host cell furin in the Golgi to yield the mature SU and TM proteins. The cleavage site between SU and TM requires the minimal sequence [KR]-X-[KR]-R. Post-translationally, palmitoylation of the transmembrane protein and of Env polyprotein (prior to its proteolytic cleavage) is essential for their association with host cell membrane lipid rafts. Palmitoylation is therefore required for envelope trafficking to classical lipid rafts, but not for viral replication.

Its subcellular location is the virion membrane. It is found in the host cell membrane. The protein resides in the host endosome membrane. Functionally, the surface protein gp120 (SU) attaches the virus to the host lymphoid cell by binding to the primary receptor CD4. This interaction induces a structural rearrangement creating a high affinity binding site for a chemokine coreceptor like CCR5. This peculiar 2 stage receptor-interaction strategy allows gp120 to maintain the highly conserved coreceptor-binding site in a cryptic conformation, protected from neutralizing antibodies. These changes are transmitted to the transmembrane protein gp41 and are thought to activate its fusogenic potential by unmasking its fusion peptide. In terms of biological role, surface protein gp120 (SU) may target the virus to gut-associated lymphoid tissue (GALT) by binding host ITGA4/ITGB7 (alpha-4/beta-7 integrins), a complex that mediates T-cell migration to the GALT. Interaction between gp120 and ITGA4/ITGB7 would allow the virus to enter GALT early in the infection, infecting and killing most of GALT's resting CD4+ T-cells. This T-cell depletion is believed to be the major insult to the host immune system leading to AIDS. Its function is as follows. The surface protein gp120 is a ligand for CD209/DC-SIGN and CLEC4M/DC-SIGNR, which are respectively found on dendritic cells (DCs), and on endothelial cells of liver sinusoids and lymph node sinuses. These interactions allow capture of viral particles at mucosal surfaces by these cells and subsequent transmission to permissive cells. DCs are professional antigen presenting cells, critical for host immunity by inducing specific immune responses against a broad variety of pathogens. They act as sentinels in various tissues where they take up antigen, process it, and present it to T-cells following migration to lymphoid organs. SIV subverts the migration properties of dendritic cells to gain access to CD4+ T-cells in lymph nodes. Virus transmission to permissive T-cells occurs either in trans (without DCs infection, through viral capture and transmission), or in cis (following DCs productive infection, through the usual CD4-gp120 interaction), thereby inducing a robust infection. In trans infection, bound virions remain infectious over days and it is proposed that they are not degraded, but protected in non-lysosomal acidic organelles within the DCs close to the cell membrane thus contributing to the viral infectious potential during DCs' migration from the periphery to the lymphoid tissues. On arrival at lymphoid tissues, intact virions recycle back to DCs' cell surface allowing virus transmission to CD4+ T-cells. Virion capture also seems to lead to MHC-II-restricted viral antigen presentation, and probably to the activation of SIV-specific CD4+ cells. The transmembrane protein gp41 (TM) acts as a class I viral fusion protein. Under the current model, the protein has at least 3 conformational states: pre-fusion native state, pre-hairpin intermediate state, and post-fusion hairpin state. During fusion of viral and target intracellular membranes, the coiled coil regions (heptad repeats) assume a trimer-of-hairpins structure, positioning the fusion peptide in close proximity to the C-terminal region of the ectodomain. The formation of this structure appears to drive apposition and subsequent fusion of viral and target cell membranes. Complete fusion occurs in host cell endosomes. The virus undergoes clathrin-dependent internalization long before endosomal fusion, thus minimizing the surface exposure of conserved viral epitopes during fusion and reducing the efficacy of inhibitors targeting these epitopes. Membranes fusion leads to delivery of the nucleocapsid into the cytoplasm. Functionally, the envelope glycoprotein gp160 precursor down-modulates cell surface CD4 antigen by interacting with it in the endoplasmic reticulum and blocking its transport to the cell surface. In terms of biological role, the gp120-gp41 heterodimer allows rapid transcytosis of the virus through CD4 negative cells such as simple epithelial monolayers of the intestinal, rectal and endocervical epithelial barriers. Both gp120 and gp41 specifically recognize glycosphingolipids galactosyl-ceramide (GalCer) or 3' sulfo-galactosyl-ceramide (GalS) present in the lipid rafts structures of epithelial cells. Binding to these alternative receptors allows the rapid transcytosis of the virus through the epithelial cells. This transcytotic vesicle-mediated transport of virions from the apical side to the basolateral side of the epithelial cells does not involve infection of the cells themselves. This chain is Envelope glycoprotein gp160 (env), found in Simian immunodeficiency virus (isolate K6W) (SIV-mac).